We begin with the raw amino-acid sequence, 218 residues long: Adenylate kinase (218 aa).

10 to 15 serves as a coordination point for ATP; that stretch reads GAGKGT. The interval 30 to 59 is NMP; sequence STGDMLRAAVKAGTPLGLEAKKVMDAGGLV. Residues threonine 31, arginine 36, 57–59, 85–88, and glutamine 92 contribute to the AMP site; these read GLV and GFPR. Residues 122–159 are LID; the sequence is GRRVHVASGRTYHVKFNPPKVAGKDDETGEDLIQRADD. Residues arginine 123 and 132 to 133 contribute to the ATP site; that span reads TY. Residues arginine 156 and arginine 167 each coordinate AMP. Glycine 203 serves as a coordination point for ATP.

It belongs to the adenylate kinase family. As to quaternary structure, monomer.

It is found in the cytoplasm. It carries out the reaction AMP + ATP = 2 ADP. The protein operates within purine metabolism; AMP biosynthesis via salvage pathway; AMP from ADP: step 1/1. Catalyzes the reversible transfer of the terminal phosphate group between ATP and AMP. Plays an important role in cellular energy homeostasis and in adenine nucleotide metabolism. In Laribacter hongkongensis (strain HLHK9), this protein is Adenylate kinase.